Reading from the N-terminus, the 353-residue chain is UPF0283 membrane protein YcjF (353 aa).

Basic and acidic residues predominate over residues 1–19 (MSEPLKPRIDFAEPLKEEP). Residues 1–35 (MSEPLKPRIDFAEPLKEEPTSAFKAQQTFSEAESR) form a disordered region. The next 3 helical transmembrane spans lie at 70–90 (MVMG…VQWT), 100–120 (VALG…GSVV), and 213–233 (ESTL…FIAW).

This sequence belongs to the UPF0283 family.

The protein localises to the cell inner membrane. This chain is UPF0283 membrane protein YcjF, found in Salmonella paratyphi A (strain AKU_12601).